The primary structure comprises 275 residues: Elongation factor Ts (275 aa).

The involved in Mg(2+) ion dislocation from EF-Tu stretch occupies residues 76 to 79 (TDFV).

This sequence belongs to the EF-Ts family.

Its subcellular location is the cytoplasm. Functionally, associates with the EF-Tu.GDP complex and induces the exchange of GDP to GTP. It remains bound to the aminoacyl-tRNA.EF-Tu.GTP complex up to the GTP hydrolysis stage on the ribosome. The sequence is that of Elongation factor Ts from Nocardia farcinica (strain IFM 10152).